A 340-amino-acid polypeptide reads, in one-letter code: Glyceraldehyde-3-phosphate dehydrogenase, cytosolic (340 aa).

NAD(+)-binding positions include 16–17 (RI), D38, and R85. D-glyceraldehyde 3-phosphate-binding positions include 156-158 (SCT), T187, 216-217 (TG), and R239. The active-site Nucleophile is the C157. Position 321 (N321) interacts with NAD(+).

This sequence belongs to the glyceraldehyde-3-phosphate dehydrogenase family. As to quaternary structure, homotetramer.

The protein resides in the cytoplasm. The enzyme catalyses D-glyceraldehyde 3-phosphate + phosphate + NAD(+) = (2R)-3-phospho-glyceroyl phosphate + NADH + H(+). Its pathway is carbohydrate degradation; glycolysis; pyruvate from D-glyceraldehyde 3-phosphate: step 1/5. Key enzyme in glycolysis that catalyzes the first step of the pathway by converting D-glyceraldehyde 3-phosphate (G3P) into 3-phospho-D-glyceroyl phosphate. Essential for the maintenance of cellular ATP levels and carbohydrate metabolism. The sequence is that of Glyceraldehyde-3-phosphate dehydrogenase, cytosolic (GAPC) from Pinus sylvestris (Scotch pine).